A 153-amino-acid polypeptide reads, in one-letter code: 3-hydroxyacyl-[acyl-carrier-protein] dehydratase FabZ (153 aa).

The active site involves His-54.

This sequence belongs to the thioester dehydratase family. FabZ subfamily.

It is found in the cytoplasm. It carries out the reaction a (3R)-hydroxyacyl-[ACP] = a (2E)-enoyl-[ACP] + H2O. Involved in unsaturated fatty acids biosynthesis. Catalyzes the dehydration of short chain beta-hydroxyacyl-ACPs and long chain saturated and unsaturated beta-hydroxyacyl-ACPs. This is 3-hydroxyacyl-[acyl-carrier-protein] dehydratase FabZ from Chlamydia trachomatis serovar L2 (strain ATCC VR-902B / DSM 19102 / 434/Bu).